The following is a 161-amino-acid chain: Allophycocyanin beta chain (161 aa).

Residue Asn-71 is modified to N4-methylasparagine. (2R,3E)-phycocyanobilin is bound at residue Cys-81.

Belongs to the phycobiliprotein family. As to quaternary structure, heterodimer of an alpha and a beta chain. In terms of processing, contains one covalently linked phycocyanobilin chromophore.

It localises to the cellular thylakoid membrane. Functionally, light-harvesting photosynthetic bile pigment-protein from the phycobiliprotein complex. Allophycocyanin has a maximum absorption at approximately 650 nanometers. This Synechocystis sp. (strain ATCC 27184 / PCC 6803 / Kazusa) protein is Allophycocyanin beta chain (apcB).